The primary structure comprises 251 residues: Ubiquinone/menaquinone biosynthesis C-methyltransferase UbiE (251 aa).

Residues threonine 74, aspartate 95, and 123-124 (NA) each bind S-adenosyl-L-methionine.

Belongs to the class I-like SAM-binding methyltransferase superfamily. MenG/UbiE family.

The enzyme catalyses a 2-demethylmenaquinol + S-adenosyl-L-methionine = a menaquinol + S-adenosyl-L-homocysteine + H(+). It catalyses the reaction a 2-methoxy-6-(all-trans-polyprenyl)benzene-1,4-diol + S-adenosyl-L-methionine = a 5-methoxy-2-methyl-3-(all-trans-polyprenyl)benzene-1,4-diol + S-adenosyl-L-homocysteine + H(+). Its pathway is quinol/quinone metabolism; menaquinone biosynthesis; menaquinol from 1,4-dihydroxy-2-naphthoate: step 2/2. The protein operates within cofactor biosynthesis; ubiquinone biosynthesis. Its function is as follows. Methyltransferase required for the conversion of demethylmenaquinol (DMKH2) to menaquinol (MKH2) and the conversion of 2-polyprenyl-6-methoxy-1,4-benzoquinol (DDMQH2) to 2-polyprenyl-3-methyl-6-methoxy-1,4-benzoquinol (DMQH2). This is Ubiquinone/menaquinone biosynthesis C-methyltransferase UbiE from Shewanella baltica (strain OS155 / ATCC BAA-1091).